The chain runs to 384 residues: Mitogen-activated protein kinase homolog 1 (384 aa).

In terms of domain architecture, Protein kinase spans 32–319; sequence YVPIKPIGRG…VMEALQHPYM (288 aa). ATP contacts are provided by residues 38-46 and lysine 61; that span reads IGRGAYGIV. Catalysis depends on aspartate 158, which acts as the Proton acceptor. Threonine 191 is modified (phosphothreonine). The short motif at 191–193 is the TXY element; it reads TEY. A Phosphotyrosine modification is found at tyrosine 193.

Belongs to the protein kinase superfamily. CMGC Ser/Thr protein kinase family. MAP kinase subfamily. Mg(2+) serves as cofactor. Post-translationally, dually phosphorylated on Thr-191 and Tyr-193, which activates the enzyme. Expressed in vegetative organs such as leaf, root, or stem. In the reproductive organs, it is found in the ovary, but not in the stamen.

It carries out the reaction L-seryl-[protein] + ATP = O-phospho-L-seryl-[protein] + ADP + H(+). The catalysed reaction is L-threonyl-[protein] + ATP = O-phospho-L-threonyl-[protein] + ADP + H(+). With respect to regulation, activated by tyrosine and threonine phosphorylation. In Petunia hybrida (Petunia), this protein is Mitogen-activated protein kinase homolog 1 (MPK1).